A 419-amino-acid chain; its full sequence is MAVWTLGINHTTAPLDLRGRFAFALDQVEPTLRALRGSLSRQPEAALISTCNRTEIYCAGEKPELEHTLDWLAQTGGVSSSLLRTHSYTLQDDLAARHAFRVASGLDSMVLGETQILGQIKNAVRAAEAAGALGNTLSQLFQRSFAVAKEVRSSTEIGAHSISMAAAAVRLAGQLFEDLGQVKILFVGAGEMIELCATHFAAKSPKAIAIANRSLENGEKLASRFGAEVMRLADLPDRLHEFDAVVSCTASTLPIIGLGAVERALKRRKRRPMFMVDLAVPRDIEIEVKALEDVYLYTVDDLASVVQTAQASRQAAVAQAEAIVDAGVLSFMHWVDQRGSVPLIQQLNAQADEWRAAELARARKLLAKGEDVEAVLEALSKGLTQKMLHGAMTELRASDTAARERASAAIQHFFLRKER.

Residues Thr-50 to Arg-53, Ser-108, Glu-113 to Gln-115, and Gln-119 each bind substrate. Cys-51 functions as the Nucleophile in the catalytic mechanism. Gly-188 to Ile-193 provides a ligand contact to NADP(+).

Belongs to the glutamyl-tRNA reductase family. In terms of assembly, homodimer.

The enzyme catalyses (S)-4-amino-5-oxopentanoate + tRNA(Glu) + NADP(+) = L-glutamyl-tRNA(Glu) + NADPH + H(+). It participates in porphyrin-containing compound metabolism; protoporphyrin-IX biosynthesis; 5-aminolevulinate from L-glutamyl-tRNA(Glu): step 1/2. In terms of biological role, catalyzes the NADPH-dependent reduction of glutamyl-tRNA(Glu) to glutamate 1-semialdehyde (GSA). This is Glutamyl-tRNA reductase from Albidiferax ferrireducens (strain ATCC BAA-621 / DSM 15236 / T118) (Rhodoferax ferrireducens).